The sequence spans 557 residues: Glutamine--tRNA ligase (557 aa).

The 'HIGH' region signature appears at 42 to 52 (PEPNGYLHIGH). ATP-binding positions include 43 to 45 (EPN) and 49 to 55 (HIGHAKS). The L-glutamine site is built by aspartate 75 and tyrosine 220. ATP is bound by residues threonine 239 and 270–271 (RL). The 'KMSKS' region signature appears at 277–281 (LTSKR).

The protein belongs to the class-I aminoacyl-tRNA synthetase family. In terms of assembly, monomer.

Its subcellular location is the cytoplasm. It carries out the reaction tRNA(Gln) + L-glutamine + ATP = L-glutaminyl-tRNA(Gln) + AMP + diphosphate. The polypeptide is Glutamine--tRNA ligase (Haemophilus influenzae (strain 86-028NP)).